Here is a 365-residue protein sequence, read N- to C-terminus: MMIMQYIYPFTAIVGQEKMKKALILNAINPKIGGVLIRGEKGTAKSTAVRALADLLPEIEIVEGCPFNCDPNGNLCDICKEKKKRGELKTTKKKMKVVNLPIGATEDRVIGTLDIEKAIKEGIKALEPGILAEANRNILYIDEVNLLDDHIIDVLLDAAAMGWNIIEREGVKIKHPSRFILVGTMNPEEGELRPQILDRFGLMVDVEGLNDVKDRVEVIKRVEEFNENPEAFYKKFEEEQNKLRERIIKARELLNKVEISDDLLEFISKVCIELGIQTNRADITVVRTAKALAAYNGRTYVTIDDVKEAMELALPHRMRRKPFEPPQLNKEKLEQMINEFKQQNNKDNEEKEEHKDDDVKKNMMK.

40-47 (EKGTAKST) contributes to the ATP binding site. The segment at 340 to 365 (FKQQNNKDNEEKEEHKDDDVKKNMMK) is disordered. Over residues 344–365 (NNKDNEEKEEHKDDDVKKNMMK) the composition is skewed to basic and acidic residues.

This sequence belongs to the Mg-chelatase subunits D/I family.

This is Magnesium-chelatase subunit ChlI homolog from Methanocaldococcus jannaschii (strain ATCC 43067 / DSM 2661 / JAL-1 / JCM 10045 / NBRC 100440) (Methanococcus jannaschii).